Reading from the N-terminus, the 439-residue chain is Forkhead box protein J1-A (439 aa).

Positions 124–218 form a DNA-binding region, fork-head; that stretch reads KPPYSYATLI…INGAMKKRRL (95 aa). A disordered region spans residues 273–293; the sequence is EHGWNSISDGKSHKRKQPLPK. Over residues 284–293 the composition is skewed to basic residues; it reads SHKRKQPLPK.

Belongs to the FOXJ1 family. In terms of tissue distribution, expressed in two independent areas of stage 10-11 embryos; in the dorsal blastopore lip (Spemann organizer) and shortly after in the ectodermal cells of the animal cap. As development proceeds, cells of the animal cap contribute to the epidermis and show a spotty pattern, which suggests expression in ciliated epidermal cells. Distribution of these cells is uniform in the trunk area of the embryo but more random in the head, being practically absent in the cement gland and olfactory placode. The spotted pattern becomes more dispersed as embryos grow in size. Due to cell movements during gastrulation, expression in the dorsal lip becomes located in the dorsal midline with expression restricted to the neuroectoderm. Expressed transiently in cells of the newly formed neural floor plate in the tail of older tadpoles.

The protein resides in the nucleus. Functionally, key transcription factor required for motile ciliogenesis. Activates genes essential for motile cilia formation and function. Required for ciliogenesis in multiciliated cells. The chain is Forkhead box protein J1-A (foxj1-a) from Xenopus laevis (African clawed frog).